The primary structure comprises 435 residues: Arginine biosynthesis bifunctional protein ArgJ, mitochondrial (435 aa).

6 residues coordinate substrate: Thr179, Lys205, Thr216, Glu302, Asn430, and Ser435. The active-site Nucleophile is the Thr216.

This sequence belongs to the ArgJ family. In terms of assembly, heterodimer of an alpha and a beta chain. The alpha and beta chains are autoproteolytically processed from a single precursor protein within the mitochondrion.

Its subcellular location is the mitochondrion matrix. It catalyses the reaction N(2)-acetyl-L-ornithine + L-glutamate = N-acetyl-L-glutamate + L-ornithine. It carries out the reaction L-glutamate + acetyl-CoA = N-acetyl-L-glutamate + CoA + H(+). The protein operates within amino-acid biosynthesis; L-arginine biosynthesis; L-ornithine and N-acetyl-L-glutamate from L-glutamate and N(2)-acetyl-L-ornithine (cyclic): step 1/1. Its pathway is amino-acid biosynthesis; L-arginine biosynthesis; N(2)-acetyl-L-ornithine from L-glutamate: step 1/4. Its function is as follows. Catalyzes two activities which are involved in the cyclic version of arginine biosynthesis: the synthesis of acetylglutamate from glutamate and acetyl-CoA, and of ornithine by transacetylation between acetylornithine and glutamate. The sequence is that of Arginine biosynthesis bifunctional protein ArgJ, mitochondrial from Schizosaccharomyces japonicus (strain yFS275 / FY16936) (Fission yeast).